The following is a 379-amino-acid chain: Type II methyltransferase M.SsoII (379 aa).

Residues 9-66 (IKEKRERLHMTQKEFADALGLSKYGDRTIRRWERGETKPTGAELKAVIDFPDTPPYPN) form the HTH cro/C1-type domain. The SAM-dependent MTase C5-type domain maps to 72-379 (YRMIDLFAGI…AEKIISTLDS (308 aa)). The active site involves C142.

This sequence belongs to the class I-like SAM-binding methyltransferase superfamily. C5-methyltransferase family.

The catalysed reaction is a 2'-deoxycytidine in DNA + S-adenosyl-L-methionine = a 5-methyl-2'-deoxycytidine in DNA + S-adenosyl-L-homocysteine + H(+). Functionally, a methylase that recognizes the double-stranded sequence 5'-CCNGG-3', methylates C-2 on both strands, and protects the DNA from cleavage by the SsoII endonuclease. This chain is Type II methyltransferase M.SsoII (ssoIIM), found in Shigella sonnei.